Consider the following 499-residue polypeptide: MTLRLTNTLTRRTEPFTPLRPGKASIYCCGVTVYDLCHLGHARSYINWDVLRRYLIWSGLDVRFVQNFTDIDDKILKRASDENSSMTAVSERNIDAFHADMDSLGILRPDSMPRATQCLDGIRALIGELEAKGAAYSAEGDVYFAVMKHAGYGKLSGRDLSEQQENAGGRVADAEGARKQHPFDFALWKAAKEGEPSFPSPWGAGRPGWHIECSAMVRAELGDTIDIHLGGADLVFPHHENEIAQSEAATGQELAQVWMHNGMVNVGGQKMSKSLGNFTTIRALLESGVSPMTLRLFVLQAHYRKPLDFTAEALEAAATGWKGLNAALGLGERHGQSLEWPATPALAPVALVAPSNHPSEPLEPLQQRFIDAMDDDLNSSGALAVLFDLAKPLRALANRLERGDRADRPADELAALALRWRLLRDLAAVLGLRREADSESSGPGDDSTNQDEIQAAIDARIAAKSAKNYAEADRIRDELKAQGIELIDKPGGITEWIRR.

Cysteine 29 provides a ligand contact to Zn(2+). The short motif at 31–41 is the 'HIGH' region element; that stretch reads VTVYDLCHLGH. Zn(2+) is bound by residues cysteine 213, histidine 238, and glutamate 242. The 'KMSKS' region signature appears at 270–274; the sequence is KMSKS. Lysine 273 is a binding site for ATP.

It belongs to the class-I aminoacyl-tRNA synthetase family. Monomer. Zn(2+) serves as cofactor.

The protein localises to the cytoplasm. The enzyme catalyses tRNA(Cys) + L-cysteine + ATP = L-cysteinyl-tRNA(Cys) + AMP + diphosphate. The sequence is that of Cysteine--tRNA ligase from Synechococcus sp. (strain CC9902).